The following is a 122-amino-acid chain: uncharacterized protein (122 aa).

A signal peptide spans 1–35 (MCCYVGKATKIFLCLAAALIVVGLVLGFGLAHRTW). The segment at 55-83 (YGGGGGGGDPLPATSGAGDTPPGVPLTEP) is disordered.

This is an uncharacterized protein from Oryza sativa subsp. japonica (Rice).